A 457-amino-acid chain; its full sequence is Cell division cycle 20.1, cofactor of APC complex (457 aa).

WD repeat units lie at residues 138–175 (VDDF…TSEL), 180–219 (EEKG…QLRT), 223–260 (GHQS…PIVE), 264–303 (GHTQ…SNST), 312–354 (EHTS…CLNS), 356–397 (DTGS…KMAE), and 400–439 (GHTS…ETAK).

The protein belongs to the WD repeat CDC20/Fizzy family. The APC/C is composed of at least 11 subunits that stay tightly associated throughout the cell cycle. Interacts with APC10, FZR1, FZR2, FZR3. Binds to GIG1 and PYM. Part of the mitotic checkpoint complex (MCC); interacts with MAD2, BUB3.1, BUBR1 and BUB1. Binds to cyclins CYCA1-2, CYCB2-1 and CYCB2-2. Interacts with PANS1. As to expression, expressed in meristems and organ primordia. Present in flowers, leaves, stems, roots, pollen grains and developing seeds.

It is found in the nucleus. It participates in protein modification; protein ubiquitination. In terms of biological role, component of the anaphase promoting complex/cyclosome (APC/C), a cell cycle-regulated E3 ubiquitin-protein ligase complex that controls progression through mitosis and the G1 phase of the cell cycle. The polypeptide is Cell division cycle 20.1, cofactor of APC complex (CDC20-1) (Arabidopsis thaliana (Mouse-ear cress)).